We begin with the raw amino-acid sequence, 2224 residues long: Protein sidekick (2224 aa).

The first 47 residues, Met1 to Ser47, serve as a signal peptide directing secretion. Residues Cys48–Thr2001 lie on the Extracellular side of the membrane. An Ig-like C2-type 1 domain is found at Pro72–Val155. Residues Cys95 and Cys138 are joined by a disulfide bond. N-linked (GlcNAc...) asparagine glycans are attached at residues Asn164, Asn250, Asn318, and Asn327. 4 consecutive Ig-like C2-type domains span residues Pro261–Gln355, Pro359–Ser445, Pro455–Ser541, and Thr546–Ser636. Intrachain disulfides connect Cys283–Cys336 and Cys382–Cys433. Asn463, Asn485, and Asn491 each carry an N-linked (GlcNAc...) asparagine glycan. 2 cysteine pairs are disulfide-bonded: Cys476–Cys525 and Cys567–Cys620. Asn628, Asn661, Asn707, Asn809, Asn870, Asn942, Asn1019, Asn1094, Asn1109, Asn1172, Asn1203, Asn1282, Asn1329, Asn1379, Asn1414, and Asn1420 each carry an N-linked (GlcNAc...) asparagine glycan. 13 consecutive Fibronectin type-III domains span residues Pro643–Glu753, Pro758–Gly855, Pro860–Asp967, Glu971–Val1065, Ala1069–Ala1164, Pro1169–Ala1270, Gly1275–Asp1372, Val1376–Arg1469, Ala1474–Ala1570, Gly1575–Ala1677, Glu1682–Gly1785, Ala1789–Asp1883, and Ser1885–Lys1984. N-linked (GlcNAc...) asparagine glycosylation is found at Asn1843 and Asn1876. A helical membrane pass occupies residues Trp2002–Leu2022. The Cytoplasmic portion of the chain corresponds to Cys2023–Val2224. Disordered stretches follow at residues Thr2068–Pro2157 and Leu2171–Ser2195. At Ser2071 the chain carries Phosphoserine. Residues Gly2073–Arg2085 show a composition bias toward low complexity. Thr2074 is subject to Phosphothreonine. Basic and acidic residues-rich tracts occupy residues His2112–Asp2122 and Gln2144–Pro2157. Phosphoserine occurs at positions 2113 and 2117.

This sequence belongs to the sidekick family.

It is found in the membrane. Functionally, participates in homotypic or heterotypic interactions in the eye during pattern formation to prevent extra cells from joining the precluster and differentiating as photoreceptor cells. This Drosophila melanogaster (Fruit fly) protein is Protein sidekick.